The following is a 122-amino-acid chain: MIQMQTNLDVADNSGARRVMCIKVLGGSKRKYASVGDIIVVSIKEAIPRGRVKKGDVMKAVVVRTAKDIRRADGSVIRFDNNAAVLIDNKKEPIGTRIFGPVPRELRAKNHMKIISLAPEVL.

The protein belongs to the universal ribosomal protein uL14 family. As to quaternary structure, part of the 50S ribosomal subunit. Forms a cluster with proteins L3 and L19. In the 70S ribosome, L14 and L19 interact and together make contacts with the 16S rRNA in bridges B5 and B8.

Functionally, binds to 23S rRNA. Forms part of two intersubunit bridges in the 70S ribosome. The chain is Large ribosomal subunit protein uL14 from Agrobacterium fabrum (strain C58 / ATCC 33970) (Agrobacterium tumefaciens (strain C58)).